Reading from the N-terminus, the 416-residue chain is NADH-quinone oxidoreductase subunit D (416 aa).

Belongs to the complex I 49 kDa subunit family. NDH-1 is composed of 14 different subunits. Subunits NuoB, C, D, E, F, and G constitute the peripheral sector of the complex.

It is found in the cell inner membrane. It catalyses the reaction a quinone + NADH + 5 H(+)(in) = a quinol + NAD(+) + 4 H(+)(out). Its function is as follows. NDH-1 shuttles electrons from NADH, via FMN and iron-sulfur (Fe-S) centers, to quinones in the respiratory chain. The immediate electron acceptor for the enzyme in this species is believed to be ubiquinone. Couples the redox reaction to proton translocation (for every two electrons transferred, four hydrogen ions are translocated across the cytoplasmic membrane), and thus conserves the redox energy in a proton gradient. The protein is NADH-quinone oxidoreductase subunit D of Rhodopseudomonas palustris (strain BisB5).